The following is a 221-amino-acid chain: LEEDESAAASTMAVSASLMPPIWDKTIPYDGESFHLEYMDLDEFLLENGIPASPTHLAQNLLLPVAELEGKESASSSTASPPSSSTAVFQPSETVSSTESSLEKERETPSPIDPNCVEVDVNFNPDPADLVLSSVPGGELFNPRKHKFAEEDLKPQPMIKKAKKVFVPDEQKDEKYWTRRKKNNVAAKRSRDARRLKENQITIRAAFLEKENTALRTEVAD.

A disordered region spans residues 72-116 (ESASSSTASPPSSSTAVFQPSETVSSTESSLEKERETPSPIDPNC). Residues 73–100 (SASSSTASPPSSSTAVFQPSETVSSTES) show a composition bias toward low complexity. Positions 173 to 221 (DEKYWTRRKKNNVAAKRSRDARRLKENQITIRAAFLEKENTALRTEVAD) constitute a bZIP domain. The interval 175-195 (KYWTRRKKNNVAAKRSRDARR) is basic motif. Positions 196-203 (LKENQITI) are leucine-zipper.

This sequence belongs to the bZIP family. PAR subfamily. In terms of assembly, binds DNA as a homodimer or a heterodimer. Can form a heterodimer with DBP.

It is found in the nucleus. In terms of biological role, transcription factor that binds to and transactivates the TSHB promoter. Binds to a minimal DNA-binding sequence 5'-[TC][AG][AG]TTA[TC][AG]-3'. The chain is Thyrotroph embryonic factor (TEF) from Phodopus sungorus (Striped hairy-footed hamster).